We begin with the raw amino-acid sequence, 140 residues long: Large ribosomal subunit protein uL11 (140 aa).

This sequence belongs to the universal ribosomal protein uL11 family. Part of the ribosomal stalk of the 50S ribosomal subunit. Interacts with L10 and the large rRNA to form the base of the stalk. L10 forms an elongated spine to which L12 dimers bind in a sequential fashion forming a multimeric L10(L12)X complex. One or more lysine residues are methylated.

Functionally, forms part of the ribosomal stalk which helps the ribosome interact with GTP-bound translation factors. The chain is Large ribosomal subunit protein uL11 from Symbiobacterium thermophilum (strain DSM 24528 / JCM 14929 / IAM 14863 / T).